The chain runs to 224 residues: Large ribosomal subunit protein uL3 (224 aa).

Residues 132-153 form a disordered region; the sequence is SQTKTHGTHEYQRHPGAIGQRK.

It belongs to the universal ribosomal protein uL3 family. Part of the 50S ribosomal subunit. Forms a cluster with proteins L14 and L19.

Its function is as follows. One of the primary rRNA binding proteins, it binds directly near the 3'-end of the 23S rRNA, where it nucleates assembly of the 50S subunit. This Myxococcus xanthus (strain DK1622) protein is Large ribosomal subunit protein uL3.